The sequence spans 501 residues: Pentatricopeptide repeat-containing protein At4g16470 (501 aa).

8 PPR repeats span residues 107–141 (EPETYAVLLQECKQRKEYTKGKRIHAQMFVVGFAL), 142–172 (NEYLKVKLLILYALSGDLQTAGILFRSLKIR), 173–207 (DLIPWNAMISGYVQKGLEQEGLFIYYDMRQNRIVP), 208–242 (DQYTFASVFRACSALDRLEHGKRAHAVMIKRCIKS), 243–273 (NIIVDSALVDMYFKCSSFSDGHRVFDQLSTR), 274–308 (NVITWTSLISGYGYHGKVSEVLKCFEKMKEEGCRP), 309–344 (NPVTFLVVLTACNHGGLVDKGWEHFYSMKRDYGIEP), and 345–379 (EGQHYAAMVDTLGRAGRLQEAYEFVMKSPCKEHPP). A type E motif region spans residues 380-455 (VWGSLLGACR…DPGYSQIELQ (76 aa)). The segment at 456–486 (GEVHRFMKDDTSHRLSEKIYKKVHEMTSFFM) is type E(+) motif.

This sequence belongs to the PPR family. PCMP-E subfamily.

This is Pentatricopeptide repeat-containing protein At4g16470 (PCMP-E12) from Arabidopsis thaliana (Mouse-ear cress).